A 274-amino-acid chain; its full sequence is Shikimate dehydrogenase (NADP(+)) (274 aa).

Shikimate contacts are provided by residues 14 to 16 and Thr61; that span reads SKS. Lys65 (proton acceptor) is an active-site residue. Glu77 is a binding site for NADP(+). Residues Asn86 and Asp102 each coordinate shikimate. Residues 126 to 130, 149 to 154, and Met212 each bind NADP(+); these read GAGGA and NRTLEK. Residue Tyr214 coordinates shikimate. Position 237 (Gly237) interacts with NADP(+).

This sequence belongs to the shikimate dehydrogenase family. In terms of assembly, homodimer.

It carries out the reaction shikimate + NADP(+) = 3-dehydroshikimate + NADPH + H(+). It functions in the pathway metabolic intermediate biosynthesis; chorismate biosynthesis; chorismate from D-erythrose 4-phosphate and phosphoenolpyruvate: step 4/7. Its function is as follows. Involved in the biosynthesis of the chorismate, which leads to the biosynthesis of aromatic amino acids. Catalyzes the reversible NADPH linked reduction of 3-dehydroshikimate (DHSA) to yield shikimate (SA). The protein is Shikimate dehydrogenase (NADP(+)) of Actinobacillus pleuropneumoniae serotype 5b (strain L20).